The following is a 936-amino-acid chain: Isoleucine--tRNA ligase (936 aa).

Positions 58–68 (PYANGRAHLGT) match the 'HIGH' region motif. Position 561 (E561) interacts with L-isoleucyl-5'-AMP. The short motif at 602–606 (KMSKS) is the 'KMSKS' region element. K605 lines the ATP pocket. 4 residues coordinate Zn(2+): C899, C902, C919, and C922.

It belongs to the class-I aminoacyl-tRNA synthetase family. IleS type 1 subfamily. Monomer. Zn(2+) is required as a cofactor.

Its subcellular location is the cytoplasm. It catalyses the reaction tRNA(Ile) + L-isoleucine + ATP = L-isoleucyl-tRNA(Ile) + AMP + diphosphate. In terms of biological role, catalyzes the attachment of isoleucine to tRNA(Ile). As IleRS can inadvertently accommodate and process structurally similar amino acids such as valine, to avoid such errors it has two additional distinct tRNA(Ile)-dependent editing activities. One activity is designated as 'pretransfer' editing and involves the hydrolysis of activated Val-AMP. The other activity is designated 'posttransfer' editing and involves deacylation of mischarged Val-tRNA(Ile). The polypeptide is Isoleucine--tRNA ligase (Coxiella burnetii (strain CbuK_Q154) (Coxiella burnetii (strain Q154))).